We begin with the raw amino-acid sequence, 56 residues long: Large ribosomal subunit protein bL32 (56 aa).

A compositionally biased stretch (basic residues) spans 1–19 (MAVPKRKKSRSTTRHRRAQ). Residues 1-22 (MAVPKRKKSRSTTRHRRAQWKT) form a disordered region.

The protein belongs to the bacterial ribosomal protein bL32 family.

This is Large ribosomal subunit protein bL32 from Cutibacterium acnes (strain DSM 16379 / KPA171202) (Propionibacterium acnes).